Consider the following 247-residue polypeptide: Carboxy-S-adenosyl-L-methionine synthase (247 aa).

Residues Y39, 64–66 (GCS), 89–90 (DN), 117–118 (DI), N132, and R199 contribute to the S-adenosyl-L-methionine site.

It belongs to the class I-like SAM-binding methyltransferase superfamily. Cx-SAM synthase family. Homodimer.

It catalyses the reaction prephenate + S-adenosyl-L-methionine = carboxy-S-adenosyl-L-methionine + 3-phenylpyruvate + H2O. Its function is as follows. Catalyzes the conversion of S-adenosyl-L-methionine (SAM) to carboxy-S-adenosyl-L-methionine (Cx-SAM). The chain is Carboxy-S-adenosyl-L-methionine synthase from Escherichia fergusonii (strain ATCC 35469 / DSM 13698 / CCUG 18766 / IAM 14443 / JCM 21226 / LMG 7866 / NBRC 102419 / NCTC 12128 / CDC 0568-73).